The chain runs to 1879 residues: Genome polyprotein (1879 aa).

Residues 37–98 (GPLDHDSRHG…TSTDVVRSGP (62 aa)) form a disordered region. Residues 38-50 (PLDHDSRHGRDPV) are compositionally biased toward basic and acidic residues. Polar residues predominate over residues 79–93 (SGTNPSHLKPTSTDV). One can recognise an SF3 helicase domain in the interval 564–720 (DNVISCCTRR…ENWKRENPGK (157 aa)). Residue 590–597 (GPPGCGKT) coordinates ATP. Residue Y1093 is modified to O-(5'-phospho-RNA)-tyrosine. The Peptidase C24 domain maps to 1188–1341 (GVTHKNAIVS…KLIVPYVKVD (154 aa)). Active-site for 3CLpro activity residues include H1222, E1243, and C1305. The region spanning 1591-1716 (HDRYCVDYSK…IVPPLISSVM (126 aa)) is the RdRp catalytic domain.

Homodimer. Interacts with NTPase, protein p30 and protease-polymerase p76. In terms of assembly, interacts with capsid protein VP1 and protease-polymerase p76. Interacts with host IEF4e; this interaction plays a role in translation of viral proteins. As to quaternary structure, homooligomer. Interacts with Vpg, protein p32 and may interact with capsid protein VP1. Post-translationally, specific enzymatic cleavages in vivo yield mature proteins. Pro-Pol is first autocatalytically cleaved, then processes the whole polyprotein. VPg is uridylylated by the polymerase and is covalently attached to the 5'-end of the polyadenylated genomic and subgenomic RNAs. This uridylylated form acts as a nucleotide-peptide primer for the polymerase.

The protein resides in the host endoplasmic reticulum membrane. It catalyses the reaction a ribonucleoside 5'-triphosphate + H2O = a ribonucleoside 5'-diphosphate + phosphate + H(+). The enzyme catalyses RNA(n) + a ribonucleoside 5'-triphosphate = RNA(n+1) + diphosphate. The catalysed reaction is Endopeptidase with a preference for cleavage when the P1 position is occupied by Glu-|-Xaa and the P1' position is occupied by Gly-|-Yaa.. Its function is as follows. Together with NTPase and NS4, initiates the formation of the replication complex. Induces the proliferation of the host smooth ER membranes forming long tubular structures. These remodeled membranes probably form the viral factories that contain the replication complex. Displays NTPase activity, but no helicase activity. Induces the formation of convoluted membranes derived from the host ER. These remodeled membranes probably form the viral factories that contain the replication complex. Together with NS2 and NS4, initiates the formation of the replication complex. In terms of biological role, probable key protein responsible for the formation of membrane alterations by the virus. Induces the formation of convoluted membranes derived from the host ER. These remodeled membranes probably form the viral factories that contain the replication complex. Together with NS2 and NTPase, initiates the formation of the replication complex. Functionally, viral genome-linked protein is covalently linked to the 5'-end of the positive-strand, negative-strand genomic RNAs and subgenomic RNA. Acts as a genome-linked replication primer. May recruit ribosome to viral RNA thereby promoting viral proteins translation. Interacts with host translation initiation complex to allow the translation of viral proteins. Its function is as follows. Protease-polymerase p76 processes the polyprotein: Pro-Pol is first released by autocleavage, then all other proteins are cleaved. Cleaves host translation initiation factor eIF4G1, eIF4G2 and PABP1 thereby inducing a shutdown of host protein synthesis. This shutdown may not prevent viral mRNA from being translated since viral Vpg replaces the cap. Also functions as an RNA-directed RNA polymerase, which replicates genomic and antigenomic viral RNA by recognizing specific signals. Also transcribes a subgenomic mRNA by initiating RNA synthesis internally on antigenomic RNA. This sgRNA codes for structural proteins. Catalyzes the covalent attachment VPg with viral RNAs. The polypeptide is Genome polyprotein (Otariidae (fur seals &amp; sea lions)).